Consider the following 204-residue polypeptide: Cysteine-rich protein 3 (204 aa).

The 62-residue stretch at 3–64 folds into the LIM zinc-binding 1 domain; sequence WTCPRCQQPV…KPCYGALFGP (62 aa). The tract at residues 88-107 is disordered; that stretch reads ISLSPSNFSPPRPRTGLSRA. Positions 122–183 constitute an LIM zinc-binding 2 domain; sequence SLCPGCGDPV…IPCYGYLFGP (62 aa).

Expressed specifically by the thymus.

It is found in the cytoplasm. This Mus musculus (Mouse) protein is Cysteine-rich protein 3 (Crip3).